The primary structure comprises 439 residues: Xaa-Pro dipeptidase (439 aa).

5 residues coordinate Mn(2+): D244, D255, H335, E380, and E419.

Belongs to the peptidase M24B family. Bacterial-type prolidase subfamily. Mn(2+) is required as a cofactor.

It carries out the reaction Xaa-L-Pro dipeptide + H2O = an L-alpha-amino acid + L-proline. In terms of biological role, splits dipeptides with a prolyl residue in the C-terminal position. The sequence is that of Xaa-Pro dipeptidase from Shewanella woodyi (strain ATCC 51908 / MS32).